The following is a 416-amino-acid chain: Nuclear hormone receptor family member nhr-59 (416 aa).

The nuclear receptor DNA-binding region spans 17–94 (QTFCQVCGQE…IGMDIQNFQF (78 aa)). NR C4-type zinc fingers lie at residues 20–40 (CQVC…CRAC) and 57–82 (CKDG…LKKC). An NR LBD domain is found at 162-415 (TRLQKLSSSL…FSHPELVKDV (254 aa)).

This sequence belongs to the nuclear hormone receptor family.

Its subcellular location is the nucleus. Its function is as follows. Orphan nuclear receptor. This Caenorhabditis elegans protein is Nuclear hormone receptor family member nhr-59.